We begin with the raw amino-acid sequence, 803 residues long: Pesticidal crystal protein Cry13Aa (803 aa).

It belongs to the delta endotoxin family.

In terms of biological role, endotoxin with nematicidal activity. The chain is Pesticidal crystal protein Cry13Aa (cry13Aa) from Bacillus thuringiensis.